Consider the following 347-residue polypeptide: NADH-ubiquinone oxidoreductase chain 2 (347 aa).

11 helical membrane passes run 1–21 (MNPL…MIVM), 25–45 (HWLT…PILM), 59–79 (YFLT…INLL), 96–116 (IIMT…FWVP), 122–142 (IQLS…MSIL), 145–165 (IFPT…VAIG), 178–198 (IMAY…AYNP), 201–221 (TLLN…MFML), 237–257 (APLL…LPPL), 276–296 (IITP…YMRL), and 326–346 (VSPL…LMLL).

This sequence belongs to the complex I subunit 2 family. As to quaternary structure, core subunit of respiratory chain NADH dehydrogenase (Complex I) which is composed of 45 different subunits. Interacts with TMEM242.

The protein resides in the mitochondrion inner membrane. The catalysed reaction is a ubiquinone + NADH + 5 H(+)(in) = a ubiquinol + NAD(+) + 4 H(+)(out). Its function is as follows. Core subunit of the mitochondrial membrane respiratory chain NADH dehydrogenase (Complex I) which catalyzes electron transfer from NADH through the respiratory chain, using ubiquinone as an electron acceptor. Essential for the catalytic activity and assembly of complex I. In Boneia bidens (Manado fruit bat), this protein is NADH-ubiquinone oxidoreductase chain 2.